We begin with the raw amino-acid sequence, 511 residues long: Bifunctional purine biosynthesis protein PurH (511 aa).

The 145-residue stretch at 1–145 (MKKRALVSVS…KNHKFVSVIV (145 aa)) folds into the MGS-like domain.

Belongs to the PurH family.

The enzyme catalyses (6R)-10-formyltetrahydrofolate + 5-amino-1-(5-phospho-beta-D-ribosyl)imidazole-4-carboxamide = 5-formamido-1-(5-phospho-D-ribosyl)imidazole-4-carboxamide + (6S)-5,6,7,8-tetrahydrofolate. It catalyses the reaction IMP + H2O = 5-formamido-1-(5-phospho-D-ribosyl)imidazole-4-carboxamide. It participates in purine metabolism; IMP biosynthesis via de novo pathway; 5-formamido-1-(5-phospho-D-ribosyl)imidazole-4-carboxamide from 5-amino-1-(5-phospho-D-ribosyl)imidazole-4-carboxamide (10-formyl THF route): step 1/1. Its pathway is purine metabolism; IMP biosynthesis via de novo pathway; IMP from 5-formamido-1-(5-phospho-D-ribosyl)imidazole-4-carboxamide: step 1/1. This is Bifunctional purine biosynthesis protein PurH from Bacillus thuringiensis (strain Al Hakam).